A 259-amino-acid polypeptide reads, in one-letter code: Putative protein-disulfide oxidoreductase RBE_1288 (259 aa).

A signal peptide spans 1–20 (MRNSFITLIFLLLLSGCSEE). Residues 25 to 54 (VEQESSESITPAQASTSDENNNQTTETTTP) are disordered. Residues 33 to 42 (ITPAQASTSD) are compositionally biased toward polar residues. A compositionally biased stretch (low complexity) spans 43–54 (ENNNQTTETTTP). Residues 47–251 (QTTETTTPAV…ISAAIDKAIE (205 aa)) form the Thioredoxin domain. A disulfide bridge connects residues cysteine 104 and cysteine 107.

Belongs to the thioredoxin family. DsbA subfamily.

The protein resides in the periplasm. May be required for disulfide bond formation in some proteins. In Rickettsia bellii (strain RML369-C), this protein is Putative protein-disulfide oxidoreductase RBE_1288.